The chain runs to 212 residues: tRNA (guanine-N(7)-)-methyltransferase (212 aa).

Residues Glu-44, Glu-69, Asp-96, and Asp-118 each contribute to the S-adenosyl-L-methionine site. Asp-118 is an active-site residue. Substrate is bound at residue Lys-122. The interval 124-129 (RHEKRR) is interaction with RNA. Residues Asp-154 and 192–195 (TEYE) contribute to the substrate site.

Belongs to the class I-like SAM-binding methyltransferase superfamily. TrmB family.

It carries out the reaction guanosine(46) in tRNA + S-adenosyl-L-methionine = N(7)-methylguanosine(46) in tRNA + S-adenosyl-L-homocysteine. It participates in tRNA modification; N(7)-methylguanine-tRNA biosynthesis. Functionally, catalyzes the formation of N(7)-methylguanine at position 46 (m7G46) in tRNA. The chain is tRNA (guanine-N(7)-)-methyltransferase from Pediococcus pentosaceus (strain ATCC 25745 / CCUG 21536 / LMG 10740 / 183-1w).